Here is a 956-residue protein sequence, read N- to C-terminus: Pollen-specific leucine-rich repeat extensin-like protein 1 (956 aa).

Residues 1–30 (MTRRTMEKPFGCFLLLFCFTISIFFYSAAA) form the signal peptide. LRR repeat units follow at residues 39–59 (LTRR…DIEY), 60–84 (EVDL…AWKK), 119–143 (VLVV…LGLL), 144–166 (TDVA…SLSK), 168–191 (TLMY…ALSW), 192–215 (PSLK…IFDK), 217–238 (LDAI…IGKS), 240–261 (ASVV…IGQM), 262–285 (KNLN…IGSL), 287–309 (NVTV…LSGL), and 310–332 (ANVE…NICK). Asparagine 273 and asparagine 287 each carry an N-linked (GlcNAc...) asparagine glycan. Residue asparagine 338 is glycosylated (N-linked (GlcNAc...) asparagine). Over residues 355-377 (PGSSQEKQFDDTSNCLQNRPNQK) the composition is skewed to polar residues. Disordered stretches follow at residues 355-380 (PGSS…KSAK) and 397-956 (CAGG…FPGY). Positions 408 to 417 (SPKPTPTPKA) are enriched in pro residues. 2 stretches are compositionally biased toward basic and acidic residues: residues 431 to 441 (EPSKPKPEESP) and 452 to 534 (TPSH…EESP). Pro residues predominate over residues 640–830 (QSPPVHSPPP…KPVTPLPPAT (191 aa)). The contains the Ser-Pro(4) repeats stretch occupies residues 651–956 (PPVHSPPPPV…SPPPPMFPGY (306 aa)). Residues 837-852 (PTPSSSESGEISTPVQ) show a composition bias toward polar residues. The segment covering 947–956 (SPPPPMFPGY) has biased composition (pro residues).

Post-translationally, hydroxylated on proline residues in the S-P-P-P-P repeat. In terms of processing, O-glycosylated on hydroxyprolines. Expressed in flowers, stamen, pollen, and pollinated carpels.

It localises to the secreted. The protein resides in the cell wall. Functionally, modulates cell morphogenesis by regulating cell wall formation and assembly, and/or growth polarization. This chain is Pollen-specific leucine-rich repeat extensin-like protein 1 (PEX1), found in Arabidopsis thaliana (Mouse-ear cress).